Here is a 358-residue protein sequence, read N- to C-terminus: MRKIIHIDMDCYFAAVEMRDFPEYRGKPLAVGGSSDRRGVISTCSYEARKFGVRSAMATAYAFKLCPDLILVPGRMQVYKDVSLQIREIFSRYTQLVEPLSLDEAYLDVSECQQYKGSATLIAQAIRRDILAETGLTASAGIAPVKFLAKVASDLNKPNGQYVITPETLPEFVKTLSLRKIPGVGKVTAEKLSSLGLNTCGDVQAYSKPELLARFGKFGGVLIERSQGIDERGISADRERKSVGVETTLAKDIYSLEQCQQVMPGLIQELALRLSRSAKERKIHKQVVKLKFNDFKQTTIEHRSDEVSIVMFYDLLAQAMARQEGRGIRLLGISVGLADSILAVSEIPNAQTQLDLAL.

In terms of domain architecture, UmuC spans 4–185 (IIHIDMDCYF…LSLRKIPGVG (182 aa)). Positions 8 and 103 each coordinate Mg(2+). Glutamate 104 is an active-site residue.

Belongs to the DNA polymerase type-Y family. As to quaternary structure, monomer. The cofactor is Mg(2+).

The protein resides in the cytoplasm. It catalyses the reaction DNA(n) + a 2'-deoxyribonucleoside 5'-triphosphate = DNA(n+1) + diphosphate. Functionally, poorly processive, error-prone DNA polymerase involved in untargeted mutagenesis. Copies undamaged DNA at stalled replication forks, which arise in vivo from mismatched or misaligned primer ends. These misaligned primers can be extended by PolIV. Exhibits no 3'-5' exonuclease (proofreading) activity. May be involved in translesional synthesis, in conjunction with the beta clamp from PolIII. This chain is DNA polymerase IV, found in Shewanella baltica (strain OS155 / ATCC BAA-1091).